The sequence spans 273 residues: uncharacterized protein (273 aa).

Positions 29-131 constitute an AB hydrolase-1 domain; sequence TLVCVHGFLS…VVLLCSSGYL (103 aa). Active-site residues include Ser102 and His254.

It belongs to the DmpD/TodF/XylF esterase family.

This is an uncharacterized protein from Bacillus subtilis (strain 168).